The chain runs to 969 residues: MNWQANIHKLPALLQGRLKNDLARFQEALEQKNLDTVFKAKTLKTLCLVWGASEFVATNCIRWPSLLLDLQGSGNLFRAYEPNHYVKSLAQQLTNISTETELMVVLRRFRQREMVRIVWRDLAGWASLDEVFRELSQLAEACLNSALACLHYWQSQALGTPYGSISGKPQSMVVLGMGKLGARELNLSSDIDLIFAYPESGETRGAQRTLNNEEYFIRLARRLIRVLDERTEEGFVFRVDMRLRPDGDSGPLVASFNAMENYYQNQGRDWERYAMIKARVVAGDCQAGTRLMAMLRPFSYRRYLDFGAIESLRSMKAMIAQELRRQGIKANIKLGPGGIREVEFIGQSFQLIRGGRESALQERGILRVLTLLAERDHLPYYAKEELCAAYVFLRRVEHRLQAYRDEQTHDLPTSTEGRVRLAFAMGYRDWEAFASALEEHRRRVQEHFEQLFAAPHMDITDQMAQEKRLAEVWLGGELREASLAVLSAAGYRAPEEAVQTLMYLRQSYTVRALSAQARIRLDRLMPLLLGAVGRTEYPEQCLQRVIILLETVAQRTAYLALLAEYPMALSQLVKLCAASPLIARQLTRYPLLLDELLDPRSLYQVLGYDSLAEDLKWSLESIPGDDLEQQMELLRHFCQRQTLRVAAADVTGVLPLMKVGDHLTYLAEVILKKALELSWRHLVHRHGRLQSSTGEQPEESGFAVIGYGKLGGYELGYGSDLDLVFLHNAKPGDPPSEGKKPLDPVVFYSRLGQRLIHILQTSTPSGKLYEVDTRLRPSGVSGLLVSGLDAYRGYQCMQAWTWEHQALVRARFVAGDARLGAAFTAMRQEILGRQRDPIKLRDEVRHMRAKMRNQLDRSQGGWFDLKQGRGGIADIEFIVQYGVLAWAHAHPQLLEYPDNIRILEGFAQAGLLASEESQLLADAYRAYRAAANRLNLQTHEARVEEGQFRQERIAVQQLWSALLEDESAK.

Positions 1–456 (MNWQANIHKL…HFEQLFAAPH (456 aa)) are adenylyl removase. Residues 466 to 969 (EKRLAEVWLG…SALLEDESAK (504 aa)) form an adenylyl transferase region.

It belongs to the GlnE family. Requires Mg(2+) as cofactor.

The catalysed reaction is [glutamine synthetase]-O(4)-(5'-adenylyl)-L-tyrosine + phosphate = [glutamine synthetase]-L-tyrosine + ADP. It carries out the reaction [glutamine synthetase]-L-tyrosine + ATP = [glutamine synthetase]-O(4)-(5'-adenylyl)-L-tyrosine + diphosphate. Its function is as follows. Involved in the regulation of glutamine synthetase GlnA, a key enzyme in the process to assimilate ammonia. When cellular nitrogen levels are high, the C-terminal adenylyl transferase (AT) inactivates GlnA by covalent transfer of an adenylyl group from ATP to specific tyrosine residue of GlnA, thus reducing its activity. Conversely, when nitrogen levels are low, the N-terminal adenylyl removase (AR) activates GlnA by removing the adenylyl group by phosphorolysis, increasing its activity. The regulatory region of GlnE binds the signal transduction protein PII (GlnB) which indicates the nitrogen status of the cell. This Nitrosococcus oceani (strain ATCC 19707 / BCRC 17464 / JCM 30415 / NCIMB 11848 / C-107) protein is Bifunctional glutamine synthetase adenylyltransferase/adenylyl-removing enzyme.